Here is a 186-residue protein sequence, read N- to C-terminus: Threonylcarbamoyl-AMP synthase (186 aa).

In terms of domain architecture, YrdC-like spans 2-186 (STEFEQAVAA…ARTGAVIRPS (185 aa)).

Belongs to the SUA5 family. TsaC subfamily.

The protein resides in the cytoplasm. It catalyses the reaction L-threonine + hydrogencarbonate + ATP = L-threonylcarbamoyladenylate + diphosphate + H2O. Functionally, required for the formation of a threonylcarbamoyl group on adenosine at position 37 (t(6)A37) in tRNAs that read codons beginning with adenine. Catalyzes the conversion of L-threonine, HCO(3)(-)/CO(2) and ATP to give threonylcarbamoyl-AMP (TC-AMP) as the acyladenylate intermediate, with the release of diphosphate. The sequence is that of Threonylcarbamoyl-AMP synthase from Aeromonas salmonicida (strain A449).